The primary structure comprises 683 residues: U4/U6 small nuclear ribonucleoprotein Prp3 (683 aa).

The PWI domain maps to Met1–Arg87. A compositionally biased stretch (basic and acidic residues) spans Gly73–Gly107. A disordered region spans residues Gly73–Gly135. A Glycyl lysine isopeptide (Lys-Gly) (interchain with G-Cter in SUMO2) cross-link involves residue Lys139. The segment at Ser161–Ile183 is disordered. Ser164 is modified (phosphoserine). Residues Lys244 and Lys252 each participate in a glycyl lysine isopeptide (Lys-Gly) (interchain with G-Cter in SUMO2) cross-link. The tract at residues Asn416–Asn550 is mediates interaction with SART3. Position 619 is a phosphoserine (Ser619).

As to quaternary structure, component of the precatalytic spliceosome (spliceosome B complex). Component of the U4/U6-U5 tri-snRNP complex, a building block of the precatalytic spliceosome (spliceosome B complex). The U4/U6-U5 tri-snRNP complex is composed of the U4, U6 and U5 snRNAs and at least PRPF3, PRPF4, PRPF6, PRPF8, PRPF31, SNRNP200, TXNL4A, SNRNP40, SNRPB, SNRPD1, SNRPD2, SNRPD3, SNRPE, SNRPF, SNRPG, DDX23, CD2BP2, PPIH, SNU13, EFTUD2, SART1 and USP39, plus LSM2, LSM3, LSM4, LSM5, LSM6, LSM7 and LSM8. Interacts directly with PRPF4. Part of a heteromeric complex containing PPIH, PRPF3 and PRPF4 that is stable in the absence of RNA. Interacts with SART3; the interaction is direct and recruits the deubiquitinase USP4 to PRPF3. Interacts with PRPF19. Interacts ('Lys-63'-linked polyubiquitinated) with PRPF8 (via the MPN (JAB/Mov34) domain); may stabilize the U4/U6-U5 tri-snRNP complex. Interacts with ERCC6. In terms of processing, ubiquitinated. Undergoes 'Lys-63'-linked polyubiquitination by PRPF19 and deubiquitination by USP4. 'Lys-63'-linked ubiquitination increases the affinity for PRPF8 and may regulate the assembly of the U4/U6-U5 tri-snRNP complex.

The protein localises to the nucleus. The protein resides in the nucleus speckle. Plays a role in pre-mRNA splicing as component of the U4/U6-U5 tri-snRNP complex that is involved in spliceosome assembly, and as component of the precatalytic spliceosome (spliceosome B complex). This is U4/U6 small nuclear ribonucleoprotein Prp3 (Prpf3) from Mus musculus (Mouse).